Here is a 178-residue protein sequence, read N- to C-terminus: Large ribosomal subunit protein uL6 (178 aa).

The protein belongs to the universal ribosomal protein uL6 family. Part of the 50S ribosomal subunit.

Its function is as follows. This protein binds to the 23S rRNA, and is important in its secondary structure. It is located near the subunit interface in the base of the L7/L12 stalk, and near the tRNA binding site of the peptidyltransferase center. The polypeptide is Large ribosomal subunit protein uL6 (Francisella tularensis subsp. tularensis (strain WY96-3418)).